The following is a 149-amino-acid chain: Transcriptional repressor NrdR (149 aa).

A zinc finger lies at 3-34 (CPFCFAVDTKVIDSRLVGEGSSVRRRRQCLVC). Positions 49–139 (PRVVKSNDVR…VYRSFEDIKE (91 aa)) constitute an ATP-cone domain.

Belongs to the NrdR family. Zn(2+) serves as cofactor.

In terms of biological role, negatively regulates transcription of bacterial ribonucleotide reductase nrd genes and operons by binding to NrdR-boxes. The chain is Transcriptional repressor NrdR from Escherichia fergusonii (strain ATCC 35469 / DSM 13698 / CCUG 18766 / IAM 14443 / JCM 21226 / LMG 7866 / NBRC 102419 / NCTC 12128 / CDC 0568-73).